Reading from the N-terminus, the 158-residue chain is NAD(P)H-quinone oxidoreductase subunit O, chloroplastic (158 aa).

Residues 1-38 constitute a chloroplast transit peptide; that stretch reads MAFSATVSQLSSLSTISSSLPISSRRLPHRSLPQFTVK. The interval 33 to 70 is disordered; it reads PQFTVKAEAEKEKQSTQGKSDGEASPAATKTPKTLPKK. Residues 56-70 show a composition bias toward low complexity; the sequence is ASPAATKTPKTLPKK.

It belongs to the NDH complex subunit O family. In terms of assembly, part of the chloroplast NDH complex, composed of a mixture of chloroplast and nucleus encoded subunits. Component of the NDH subcomplex A, at least composed of ndhH, ndhI, ndhJ, ndhK, ndhL, ndhM, ndhN and ndhO.

It is found in the plastid. The protein localises to the chloroplast thylakoid membrane. It carries out the reaction a plastoquinone + NADH + (n+1) H(+)(in) = a plastoquinol + NAD(+) + n H(+)(out). It catalyses the reaction a plastoquinone + NADPH + (n+1) H(+)(in) = a plastoquinol + NADP(+) + n H(+)(out). In terms of biological role, NDH shuttles electrons from NAD(P)H:plastoquinone, via FMN and iron-sulfur (Fe-S) centers, to quinones in the photosynthetic chain and possibly in a chloroplast respiratory chain. The immediate electron acceptor for the enzyme in this species is believed to be plastoquinone. Couples the redox reaction to proton translocation, and thus conserves the redox energy in a proton gradient. This is NAD(P)H-quinone oxidoreductase subunit O, chloroplastic from Arabidopsis thaliana (Mouse-ear cress).